A 272-amino-acid polypeptide reads, in one-letter code: Endoplasmic reticulum resident protein 27 (272 aa).

A signal peptide spans 1–25 (MEAMPSRCLFLLFLSTCKLSPEVVA). Residues 38–151 (EPMRLTDVQA…LVTEYNAITA (114 aa)) form the Thioredoxin domain. N-linked (GlcNAc...) asparagine glycosylation is present at Asn99. The interval 229–232 (DKWD) is PDIA3-binding site. A Prevents secretion from ER motif is present at residues 269 to 272 (KVEL).

The protein belongs to the protein disulfide isomerase family. Interacts with PDIA3.

Its subcellular location is the endoplasmic reticulum lumen. In terms of biological role, specifically binds unfolded proteins and may recruit protein disulfide isomerase PDIA3 to unfolded substrates. Binds protein substrates via a hydrophobic pocket in the C-terminal domain. May play a role in the unfolded stress response. This chain is Endoplasmic reticulum resident protein 27 (ERP27), found in Bos taurus (Bovine).